The chain runs to 287 residues: Centromere protein P (287 aa).

Residues 1 to 37 adopt a coiled-coil conformation; it reads MDNSVYQVYEDEIQLLEEEIKLLSDKYEDIQQESTFF.

This sequence belongs to the CENP-P/CTF19 family. Component of the CENPA-HI complex, at least composed of CENPH, CENPI, CENPK, CENPL, CENPM, CENPO and CENPP.

Its subcellular location is the nucleus. It localises to the chromosome. The protein resides in the centromere. In terms of biological role, component of the CENPA-HI complex, a centromeric complex involved in assembly of kinetochore proteins, mitotic progression and chromosome segregation. The sequence is that of Centromere protein P (CENPP) from Gallus gallus (Chicken).